The sequence spans 145 residues: MRVVVQRTREASVTVAGEVVGQIDHGLMLLVGITHEDTEKEVEFVADKIANLRIFEDEEGKMNFSVLDKGGQILSVSQFTLYGDCRKGRRPNFMAAARPEQAEPLYELFNTKLREKGLQVETGRFGAMMDVRLLNDGPVTLIVES.

The short motif at 137–138 is the Gly-cisPro motif, important for rejection of L-amino acids element; that stretch reads GP.

It belongs to the DTD family. In terms of assembly, homodimer.

It is found in the cytoplasm. The enzyme catalyses glycyl-tRNA(Ala) + H2O = tRNA(Ala) + glycine + H(+). The catalysed reaction is a D-aminoacyl-tRNA + H2O = a tRNA + a D-alpha-amino acid + H(+). An aminoacyl-tRNA editing enzyme that deacylates mischarged D-aminoacyl-tRNAs. Also deacylates mischarged glycyl-tRNA(Ala), protecting cells against glycine mischarging by AlaRS. Acts via tRNA-based rather than protein-based catalysis; rejects L-amino acids rather than detecting D-amino acids in the active site. By recycling D-aminoacyl-tRNA to D-amino acids and free tRNA molecules, this enzyme counteracts the toxicity associated with the formation of D-aminoacyl-tRNA entities in vivo and helps enforce protein L-homochirality. The protein is D-aminoacyl-tRNA deacylase of Brevibacillus brevis (strain 47 / JCM 6285 / NBRC 100599).